Here is a 210-residue protein sequence, read N- to C-terminus: Probable GTP-binding protein EngB (210 aa).

The 175-residue stretch at 25–199 folds into the EngB-type G domain; sequence CGIEVAFAGR…RQKLDSWFSE (175 aa). GTP contacts are provided by residues 33 to 40, 60 to 64, 78 to 81, 145 to 148, and 178 to 180; these read GRSNAGKS, GRTQL, DLPG, TKAD, and FSS. Residues serine 40 and threonine 62 each contribute to the Mg(2+) site.

It belongs to the TRAFAC class TrmE-Era-EngA-EngB-Septin-like GTPase superfamily. EngB GTPase family. The cofactor is Mg(2+).

Necessary for normal cell division and for the maintenance of normal septation. This Salmonella dublin (strain CT_02021853) protein is Probable GTP-binding protein EngB.